We begin with the raw amino-acid sequence, 439 residues long: tRNA-2-methylthio-N(6)-dimethylallyladenosine synthase (439 aa).

The MTTase N-terminal domain maps to 2–115; that stretch reads KGLYIKTYGC…LPELIVKASR (114 aa). Residues C11, C47, C78, C155, C159, and C162 each contribute to the [4Fe-4S] cluster site. The Radical SAM core domain maps to 141–372; the sequence is NSQGSSAFLA…QKLISKQQLE (232 aa). Residues 375 to 439 form the TRAM domain; the sequence is QSMVGKTIPV…QSSLLGCAFH (65 aa).

Belongs to the methylthiotransferase family. MiaB subfamily. As to quaternary structure, monomer. The cofactor is [4Fe-4S] cluster.

Its subcellular location is the cytoplasm. The catalysed reaction is N(6)-dimethylallyladenosine(37) in tRNA + (sulfur carrier)-SH + AH2 + 2 S-adenosyl-L-methionine = 2-methylsulfanyl-N(6)-dimethylallyladenosine(37) in tRNA + (sulfur carrier)-H + 5'-deoxyadenosine + L-methionine + A + S-adenosyl-L-homocysteine + 2 H(+). Its function is as follows. Catalyzes the methylthiolation of N6-(dimethylallyl)adenosine (i(6)A), leading to the formation of 2-methylthio-N6-(dimethylallyl)adenosine (ms(2)i(6)A) at position 37 in tRNAs that read codons beginning with uridine. This Wolbachia pipientis wMel protein is tRNA-2-methylthio-N(6)-dimethylallyladenosine synthase.